A 443-amino-acid polypeptide reads, in one-letter code: CBL-interacting protein kinase 29 (443 aa).

A Protein kinase domain is found at 32–292; that stretch reads YELGGLLGRG…TEEIITHPWF (261 aa). ATP-binding positions include 38–46 and K61; that span reads LGRGASAKV. Catalysis depends on D164, which acts as the Proton acceptor. The tract at residues 182 to 207 is activation loop; sequence DFGLGAVADGALHHTLCGTPAYVAPE. Positions 313-347 constitute an NAF domain; sequence AKFKTEFKEDDMARDMTAFDILACSPGSDLSGLFG. The tract at residues 350-379 is PPI; it reads PGKERVFVGEPAAAVLSRVEEAGKKEGYMV.

It belongs to the protein kinase superfamily. CAMK Ser/Thr protein kinase family. SNF1 subfamily. Mn(2+) is required as a cofactor.

It catalyses the reaction L-seryl-[protein] + ATP = O-phospho-L-seryl-[protein] + ADP + H(+). The enzyme catalyses L-threonyl-[protein] + ATP = O-phospho-L-threonyl-[protein] + ADP + H(+). CIPK serine-threonine protein kinases interact with CBL proteins. Binding of a CBL protein to the regulatory NAF domain of CIPK protein lead to the activation of the kinase in a calcium-dependent manner. The chain is CBL-interacting protein kinase 29 (CIPK29) from Oryza sativa subsp. japonica (Rice).